The chain runs to 385 residues: Cell wall mannoprotein PIR1 (385 aa).

Residues M1 to A18 form the signal peptide. PIR1/2/3 repeat units follow at residues A78 to G96, V97 to A115, Q116 to K133, A136 to V153, Q154 to A171, A173 to V190, Q191 to A208, A210 to A228, and A233 to A251. The disordered stretch occupies residues A257–S282. A glycan (N-linked (GlcNAc...) asparagine) is linked at N272.

Belongs to the PIR protein family. Covalently linked to beta-1,3-glucan of the inner cell wall layer via an alkali-sensitive ester linkage between the gamma-carboxyl group of glutamic acids, arising from specific glutamines within the PIR1/2/3 repeats, and hydroxyl groups of glucoses of beta-1,3-glucan chains. Post-translationally, highly O-glycosylated by PMT1 and contains one N-mannosylated chain.

The protein localises to the secreted. The protein resides in the cell wall. Functionally, component of the outer cell wall layer required for stability of the cell wall and specifically for cell wall rigidity. In Candida albicans (strain SC5314 / ATCC MYA-2876) (Yeast), this protein is Cell wall mannoprotein PIR1 (PIR1).